A 201-amino-acid polypeptide reads, in one-letter code: Ras-related protein Rab-5A (201 aa).

GTP contacts are provided by residues glycine 16–serine 24, leucine 35–threonine 41, aspartate 64–glutamine 68, asparagine 122–aspartate 125, and serine 152–lysine 154. Positions glutamine 38 to phenylalanine 46 match the Effector region motif. Residues cysteine 199 and cysteine 200 are each lipidated (S-geranylgeranyl cysteine).

This sequence belongs to the small GTPase superfamily. Rab family.

The protein resides in the cell membrane. Its subcellular location is the endosome membrane. Its activity is regulated as follows. Regulated by guanine nucleotide exchange factors (GEFs) which promote the exchange of bound GDP for free GTP. Its function is as follows. Required for the fusion of plasma membranes and early endosomes. The chain is Ras-related protein Rab-5A (rab5A) from Dictyostelium discoideum (Social amoeba).